Consider the following 216-residue polypeptide: Endoplasmic reticulum vesicle protein 25 (216 aa).

A signal peptide spans 1–21 (MMVSLKSSLFFMLALLTVVHA). Residues 22 to 184 (LNFDIPAKTN…TNESTNERVK (163 aa)) lie on the Lumenal side of the membrane. One can recognise a GOLD domain in the interval 34–150 (PFCLREYVGE…LEPVEADIRR (117 aa)). A helical membrane pass occupies residues 185 to 205 (NFAYLTFISLFVLVIWQILYL). Residues 206 to 216 (RSFFQRKHLIP) lie on the Cytoplasmic side of the membrane.

It belongs to the EMP24/GP25L family.

It is found in the endoplasmic reticulum membrane. The protein localises to the golgi apparatus membrane. Constituent of COPII-coated endoplasmic reticulum-derived transport vesicles. Required for efficient transport of a subset of secretory proteins to the Golgi. Facilitates retrograde transport from the Golgi to the endoplasmic reticulum. The sequence is that of Endoplasmic reticulum vesicle protein 25 (erv25) from Schizosaccharomyces pombe (strain 972 / ATCC 24843) (Fission yeast).